A 143-amino-acid polypeptide reads, in one-letter code: Transcriptional regulator MraZ (143 aa).

SpoVT-AbrB domains lie at 5–47 (EYLH…PLDE) and 76–119 (ATEC…SQAL).

Belongs to the MraZ family. In terms of assembly, forms oligomers.

It is found in the cytoplasm. Its subcellular location is the nucleoid. This is Transcriptional regulator MraZ from Desulfitobacterium hafniense (strain Y51).